Consider the following 446-residue polypeptide: N-succinylarginine dihydrolase (446 aa).

Substrate contacts are provided by residues 19 to 28 (AGLSFGNVAS), Asn110, and 137 to 138 (HR). Glu174 is an active-site residue. Residue Arg213 coordinates substrate. The active site involves His249. Asp251 and Asn364 together coordinate substrate. Cys370 serves as the catalytic Nucleophile.

The protein belongs to the succinylarginine dihydrolase family. As to quaternary structure, homodimer.

The enzyme catalyses N(2)-succinyl-L-arginine + 2 H2O + 2 H(+) = N(2)-succinyl-L-ornithine + 2 NH4(+) + CO2. It functions in the pathway amino-acid degradation; L-arginine degradation via AST pathway; L-glutamate and succinate from L-arginine: step 2/5. Functionally, catalyzes the hydrolysis of N(2)-succinylarginine into N(2)-succinylornithine, ammonia and CO(2). The protein is N-succinylarginine dihydrolase of Burkholderia cenocepacia (strain ATCC BAA-245 / DSM 16553 / LMG 16656 / NCTC 13227 / J2315 / CF5610) (Burkholderia cepacia (strain J2315)).